The following is a 337-amino-acid chain: uncharacterized protein (337 aa).

Helical transmembrane passes span 241–261 (FTLL…GAFI) and 273–293 (ASLI…IGII).

Belongs to the glycosyltransferase 2 family.

The protein resides in the cell membrane. This is an uncharacterized protein from Bacillus subtilis (strain 168).